The chain runs to 195 residues: Imidazoleglycerol-phosphate dehydratase (195 aa).

This sequence belongs to the imidazoleglycerol-phosphate dehydratase family.

It localises to the cytoplasm. The enzyme catalyses D-erythro-1-(imidazol-4-yl)glycerol 3-phosphate = 3-(imidazol-4-yl)-2-oxopropyl phosphate + H2O. The protein operates within amino-acid biosynthesis; L-histidine biosynthesis; L-histidine from 5-phospho-alpha-D-ribose 1-diphosphate: step 6/9. The chain is Imidazoleglycerol-phosphate dehydratase from Frankia casuarinae (strain DSM 45818 / CECT 9043 / HFP020203 / CcI3).